The chain runs to 124 residues: MEKYLVIAVGGSIGAILRYLTGVYSAKFFGTWLPYGTLIVNVVGSFILSFFMILFLEKLSLDPLWRLFVAVGFCGSYTTLSSITYETLSIVMDGDYVRALLNIALNFGLSFLSAFAGIVLARML.

4 helical membrane passes run tyrosine 4 to tyrosine 24, glycine 36 to leucine 56, proline 63 to isoleucine 83, and leucine 100 to leucine 120. Na(+) contacts are provided by glycine 75 and threonine 78.

This sequence belongs to the fluoride channel Fluc/FEX (TC 1.A.43) family.

Its subcellular location is the cell inner membrane. It catalyses the reaction fluoride(in) = fluoride(out). Its activity is regulated as follows. Na(+) is not transported, but it plays an essential structural role and its presence is essential for fluoride channel function. Functionally, fluoride-specific ion channel. Important for reducing fluoride concentration in the cell, thus reducing its toxicity. The chain is Fluoride-specific ion channel FluC from Sulfurihydrogenibium sp. (strain YO3AOP1).